Reading from the N-terminus, the 188-residue chain is Elongation factor P (188 aa).

The protein belongs to the elongation factor P family.

The protein localises to the cytoplasm. The protein operates within protein biosynthesis; polypeptide chain elongation. Its function is as follows. Involved in peptide bond synthesis. Stimulates efficient translation and peptide-bond synthesis on native or reconstituted 70S ribosomes in vitro. Probably functions indirectly by altering the affinity of the ribosome for aminoacyl-tRNA, thus increasing their reactivity as acceptors for peptidyl transferase. The polypeptide is Elongation factor P (Rickettsia canadensis (strain McKiel)).